The following is a 61-amino-acid chain: Ferredoxin-3 (61 aa).

4Fe-4S ferredoxin-type domains follow at residues 2 to 31 and 32 to 61; these read YKIT…LQDG and KAVA…VEEN. Positions 11 and 17 each coordinate [3Fe-4S] cluster. [4Fe-4S] cluster contacts are provided by cysteine 21, cysteine 41, cysteine 44, and cysteine 47. Cysteine 51 provides a ligand contact to [3Fe-4S] cluster.

The cofactor is [3Fe-4S] cluster. [4Fe-4S] cluster serves as cofactor.

Ferredoxins are iron-sulfur proteins that transfer electrons in a wide variety of metabolic reactions. The protein is Ferredoxin-3 of Desulfocurvibacter africanus (Desulfovibrio africanus).